The following is an 89-amino-acid chain: Small ribosomal subunit protein uS15 (89 aa).

Belongs to the universal ribosomal protein uS15 family. As to quaternary structure, part of the 30S ribosomal subunit. Forms a bridge to the 50S subunit in the 70S ribosome, contacting the 23S rRNA.

In terms of biological role, one of the primary rRNA binding proteins, it binds directly to 16S rRNA where it helps nucleate assembly of the platform of the 30S subunit by binding and bridging several RNA helices of the 16S rRNA. Its function is as follows. Forms an intersubunit bridge (bridge B4) with the 23S rRNA of the 50S subunit in the ribosome. The sequence is that of Small ribosomal subunit protein uS15 from Klebsiella pneumoniae subsp. pneumoniae (strain ATCC 700721 / MGH 78578).